The following is a 155-amino-acid chain: MRCPYCGHEDSQVKDSRPTEDGAAIRRRRQCEDCGARFTTFERIQLREVVVIKAGGTREPFDREKLMRSVQIACRKRPIDGARIERLVSGIQRQLETSGENEVQASQIGAMVMEALKGFDNVAYIRFASVYRDFTEARDFEEFASTITEAARPIK.

The tract at residues 1 to 24 is disordered; that stretch reads MRCPYCGHEDSQVKDSRPTEDGAA. A zinc finger lies at 3-34; that stretch reads CPYCGHEDSQVKDSRPTEDGAAIRRRRQCEDC. Over residues 7-24 the composition is skewed to basic and acidic residues; the sequence is GHEDSQVKDSRPTEDGAA. Positions 49-139 constitute an ATP-cone domain; sequence VVVIKAGGTR…VYRDFTEARD (91 aa).

The protein belongs to the NrdR family. Requires Zn(2+) as cofactor.

Its function is as follows. Negatively regulates transcription of bacterial ribonucleotide reductase nrd genes and operons by binding to NrdR-boxes. This is Transcriptional repressor NrdR from Sphingopyxis alaskensis (strain DSM 13593 / LMG 18877 / RB2256) (Sphingomonas alaskensis).